The chain runs to 515 residues: Maturase K (515 aa).

It belongs to the intron maturase 2 family. MatK subfamily.

It is found in the plastid. The protein resides in the chloroplast. Its function is as follows. Usually encoded in the trnK tRNA gene intron. Probably assists in splicing its own and other chloroplast group II introns. This is Maturase K from Pinus clausa (Sand pine).